The sequence spans 475 residues: Ribulose bisphosphate carboxylase large chain (475 aa).

The propeptide occupies 1 to 2; sequence MA. Residue Pro-3 is modified to N-acetylproline. The residue at position 14 (Lys-14) is an N6,N6,N6-trimethyllysine. The substrate site is built by Asn-123 and Thr-173. Lys-175 acts as the Proton acceptor in catalysis. Lys-177 serves as a coordination point for substrate. Mg(2+)-binding residues include Lys-201, Asp-203, and Glu-204. At Lys-201 the chain carries N6-carboxylysine. Catalysis depends on His-294, which acts as the Proton acceptor. Positions 295, 327, and 379 each coordinate substrate.

The protein belongs to the RuBisCO large chain family. Type I subfamily. As to quaternary structure, heterohexadecamer of 8 large chains and 8 small chains; disulfide-linked. The disulfide link is formed within the large subunit homodimers. The cofactor is Mg(2+). Post-translationally, the disulfide bond which can form in the large chain dimeric partners within the hexadecamer appears to be associated with oxidative stress and protein turnover.

It is found in the plastid. The protein resides in the chloroplast. It catalyses the reaction 2 (2R)-3-phosphoglycerate + 2 H(+) = D-ribulose 1,5-bisphosphate + CO2 + H2O. The catalysed reaction is D-ribulose 1,5-bisphosphate + O2 = 2-phosphoglycolate + (2R)-3-phosphoglycerate + 2 H(+). In terms of biological role, ruBisCO catalyzes two reactions: the carboxylation of D-ribulose 1,5-bisphosphate, the primary event in carbon dioxide fixation, as well as the oxidative fragmentation of the pentose substrate in the photorespiration process. Both reactions occur simultaneously and in competition at the same active site. The chain is Ribulose bisphosphate carboxylase large chain from Bryopsis maxima (Green alga).